The primary structure comprises 124 residues: Fluoride-specific ion channel FluC (124 aa).

The next 4 membrane-spanning stretches (helical) occupy residues 5–25 (FLQV…VNIL), 35–55 (LGTL…AALL), 63–83 (LAPF…AFAL), and 98–118 (LGYV…GLTV). The Na(+) site is built by G73 and T76.

Belongs to the fluoride channel Fluc/FEX (TC 1.A.43) family.

The protein resides in the cell inner membrane. The catalysed reaction is fluoride(in) = fluoride(out). Its activity is regulated as follows. Na(+) is not transported, but it plays an essential structural role and its presence is essential for fluoride channel function. Its function is as follows. Fluoride-specific ion channel. Important for reducing fluoride concentration in the cell, thus reducing its toxicity. The polypeptide is Fluoride-specific ion channel FluC (Paracoccus denitrificans (strain Pd 1222)).